The sequence spans 425 residues: 2-oxoglutarate and iron-dependent oxygenase JMJD4 (425 aa).

The region spanning 141 to 300 (SRAFPEQDVY…IMWCFLQDEL (160 aa)) is the JmjC domain. Residues His-188, Asp-190, and His-268 each coordinate Fe cation.

Belongs to the JMJD6 family. The cofactor is Fe(2+).

The protein localises to the cytoplasm. It catalyses the reaction L-lysyl-[protein] + 2-oxoglutarate + O2 = 4-hydroxy-L-lysyl-[protein] + succinate + CO2. Catalyzes the 2-oxoglutarate and iron-dependent C4-lysyl hydroxylation of ETF1 at 'Lys-63' thereby promoting the translational termination efficiency of ETF1. In Gallus gallus (Chicken), this protein is 2-oxoglutarate and iron-dependent oxygenase JMJD4 (JMJD4).